Reading from the N-terminus, the 476-residue chain is Aspartyl/glutamyl-tRNA(Asn/Gln) amidotransferase subunit B (476 aa).

The protein belongs to the GatB/GatE family. GatB subfamily. As to quaternary structure, heterotrimer of A, B and C subunits.

It carries out the reaction L-glutamyl-tRNA(Gln) + L-glutamine + ATP + H2O = L-glutaminyl-tRNA(Gln) + L-glutamate + ADP + phosphate + H(+). The enzyme catalyses L-aspartyl-tRNA(Asn) + L-glutamine + ATP + H2O = L-asparaginyl-tRNA(Asn) + L-glutamate + ADP + phosphate + 2 H(+). In terms of biological role, allows the formation of correctly charged Asn-tRNA(Asn) or Gln-tRNA(Gln) through the transamidation of misacylated Asp-tRNA(Asn) or Glu-tRNA(Gln) in organisms which lack either or both of asparaginyl-tRNA or glutaminyl-tRNA synthetases. The reaction takes place in the presence of glutamine and ATP through an activated phospho-Asp-tRNA(Asn) or phospho-Glu-tRNA(Gln). The protein is Aspartyl/glutamyl-tRNA(Asn/Gln) amidotransferase subunit B of Moorella thermoacetica (strain ATCC 39073 / JCM 9320).